The chain runs to 162 residues: Cyclic pyranopterin monophosphate synthase (162 aa).

Substrate-binding positions include Met75–His77 and Met116–Glu117. The active site involves Asp131.

It belongs to the MoaC family. Homohexamer; trimer of dimers.

It catalyses the reaction (8S)-3',8-cyclo-7,8-dihydroguanosine 5'-triphosphate = cyclic pyranopterin phosphate + diphosphate. The protein operates within cofactor biosynthesis; molybdopterin biosynthesis. Catalyzes the conversion of (8S)-3',8-cyclo-7,8-dihydroguanosine 5'-triphosphate to cyclic pyranopterin monophosphate (cPMP). The sequence is that of Cyclic pyranopterin monophosphate synthase from Staphylococcus epidermidis (strain ATCC 35984 / DSM 28319 / BCRC 17069 / CCUG 31568 / BM 3577 / RP62A).